Consider the following 230-residue polypeptide: Phosphatidylserine decarboxylase proenzyme (230 aa).

The Schiff-base intermediate with substrate; via pyruvic acid role is filled by serine 186. Residue serine 186 is modified to Pyruvic acid (Ser); by autocatalysis.

This sequence belongs to the phosphatidylserine decarboxylase family. PSD-A subfamily. Heterodimer of a large membrane-associated beta subunit and a small pyruvoyl-containing alpha subunit. Requires pyruvate as cofactor. Post-translationally, is synthesized initially as an inactive proenzyme. Formation of the active enzyme involves a self-maturation process in which the active site pyruvoyl group is generated from an internal serine residue via an autocatalytic post-translational modification. Two non-identical subunits are generated from the proenzyme in this reaction, and the pyruvate is formed at the N-terminus of the alpha chain, which is derived from the carboxyl end of the proenzyme. The post-translation cleavage follows an unusual pathway, termed non-hydrolytic serinolysis, in which the side chain hydroxyl group of the serine supplies its oxygen atom to form the C-terminus of the beta chain, while the remainder of the serine residue undergoes an oxidative deamination to produce ammonia and the pyruvoyl prosthetic group on the alpha chain.

Its subcellular location is the cell membrane. It carries out the reaction a 1,2-diacyl-sn-glycero-3-phospho-L-serine + H(+) = a 1,2-diacyl-sn-glycero-3-phosphoethanolamine + CO2. The protein operates within phospholipid metabolism; phosphatidylethanolamine biosynthesis; phosphatidylethanolamine from CDP-diacylglycerol: step 2/2. In terms of biological role, catalyzes the formation of phosphatidylethanolamine (PtdEtn) from phosphatidylserine (PtdSer). The sequence is that of Phosphatidylserine decarboxylase proenzyme from Wolbachia pipientis wMel.